Consider the following 124-residue polypeptide: MaFF-interacting protein (124 aa).

The stretch at 54–96 (LVSEVEELYKSITALREKLLQAEQSLRNLKDIHMSLEKDVTAM) forms a coiled coil.

Belongs to the tektin family. As to quaternary structure, interacts with MIS18A. Interacts (via its coiled-coil region) with MAFF. In terms of tissue distribution, strongly expressed in brain, kidney and ovary. Moderately expressed in liver, spleen, thymus, prostate, testis, small intestine and colon. Weakly expressed in heart, placenta, lung and leukocytes.

It is found in the cytoplasm. The protein resides in the nucleus. The protein localises to the nucleolus. Its function is as follows. Acts as a coactivator of MAFF transcriptional activity. Inhibits cell growth and colony-forming efficiency. The polypeptide is MaFF-interacting protein (MAFIP) (Homo sapiens (Human)).